Consider the following 886-residue polypeptide: Isoleucine--tRNA ligase (886 aa).

Positions P60–H70 match the 'HIGH' region motif. E546 lines the L-isoleucyl-5'-AMP pocket. A 'KMSKS' region motif is present at residues K587–S591. K590 serves as a coordination point for ATP. Positions 856, 859, 870, and 873 each coordinate Zn(2+).

This sequence belongs to the class-I aminoacyl-tRNA synthetase family. IleS type 1 subfamily. As to quaternary structure, monomer. Requires Zn(2+) as cofactor.

Its subcellular location is the cytoplasm. It carries out the reaction tRNA(Ile) + L-isoleucine + ATP = L-isoleucyl-tRNA(Ile) + AMP + diphosphate. Catalyzes the attachment of isoleucine to tRNA(Ile). As IleRS can inadvertently accommodate and process structurally similar amino acids such as valine, to avoid such errors it has two additional distinct tRNA(Ile)-dependent editing activities. One activity is designated as 'pretransfer' editing and involves the hydrolysis of activated Val-AMP. The other activity is designated 'posttransfer' editing and involves deacylation of mischarged Val-tRNA(Ile). The sequence is that of Isoleucine--tRNA ligase from Mesomycoplasma hyopneumoniae (strain 7448) (Mycoplasma hyopneumoniae).